The following is a 245-amino-acid chain: 3-deoxy-manno-octulosonate cytidylyltransferase (245 aa).

The protein belongs to the KdsB family.

It localises to the cytoplasm. The catalysed reaction is 3-deoxy-alpha-D-manno-oct-2-ulosonate + CTP = CMP-3-deoxy-beta-D-manno-octulosonate + diphosphate. Its pathway is nucleotide-sugar biosynthesis; CMP-3-deoxy-D-manno-octulosonate biosynthesis; CMP-3-deoxy-D-manno-octulosonate from 3-deoxy-D-manno-octulosonate and CTP: step 1/1. It functions in the pathway bacterial outer membrane biogenesis; lipopolysaccharide biosynthesis. Functionally, activates KDO (a required 8-carbon sugar) for incorporation into bacterial lipopolysaccharide in Gram-negative bacteria. The chain is 3-deoxy-manno-octulosonate cytidylyltransferase from Acaryochloris marina (strain MBIC 11017).